A 172-amino-acid chain; its full sequence is Large ribosomal subunit protein uL10 (172 aa).

The protein belongs to the universal ribosomal protein uL10 family. In terms of assembly, part of the ribosomal stalk of the 50S ribosomal subunit. The N-terminus interacts with L11 and the large rRNA to form the base of the stalk. The C-terminus forms an elongated spine to which L12 dimers bind in a sequential fashion forming a multimeric L10(L12)X complex.

Forms part of the ribosomal stalk, playing a central role in the interaction of the ribosome with GTP-bound translation factors. The sequence is that of Large ribosomal subunit protein uL10 from Brucella suis (strain ATCC 23445 / NCTC 10510).